A 258-amino-acid polypeptide reads, in one-letter code: UPF0246 protein ABO_1338 (258 aa).

The protein belongs to the UPF0246 family.

This chain is UPF0246 protein ABO_1338, found in Alcanivorax borkumensis (strain ATCC 700651 / DSM 11573 / NCIMB 13689 / SK2).